We begin with the raw amino-acid sequence, 302 residues long: Recombination-associated protein RdgC (302 aa).

It belongs to the RdgC family.

The protein localises to the cytoplasm. Its subcellular location is the nucleoid. May be involved in recombination. This chain is Recombination-associated protein RdgC, found in Halorhodospira halophila (strain DSM 244 / SL1) (Ectothiorhodospira halophila (strain DSM 244 / SL1)).